Here is a 399-residue protein sequence, read N- to C-terminus: Trimethyllysine dioxygenase (399 aa).

Positions 214, 216, and 360 each coordinate Fe cation.

It belongs to the gamma-BBH/TMLD family. It depends on Fe(2+) as a cofactor. L-ascorbate serves as cofactor.

It is found in the cytoplasm. The enzyme catalyses N(6),N(6),N(6)-trimethyl-L-lysine + 2-oxoglutarate + O2 = (3S)-3-hydroxy-N(6),N(6),N(6)-trimethyl-L-lysine + succinate + CO2. Its pathway is amine and polyamine biosynthesis; carnitine biosynthesis. In terms of biological role, converts trimethyllysine (TML) into hydroxytrimethyllysine (HTML). The sequence is that of Trimethyllysine dioxygenase from Meyerozyma guilliermondii (strain ATCC 6260 / CBS 566 / DSM 6381 / JCM 1539 / NBRC 10279 / NRRL Y-324) (Yeast).